We begin with the raw amino-acid sequence, 439 residues long: Protein ABHD8 (439 aa).

Disordered stretches follow at residues 54–75 and 122–148; these read HAGPAPIPTPPPPPPEDDPGVK and ELAEPAGGDTRANPGSGRRRRPRRPKR. A compositionally biased stretch (pro residues) spans 58 to 67; sequence APIPTPPPPP. Residues 138-148 show a composition bias toward basic residues; the sequence is GRRRRPRRPKR. One can recognise an AB hydrolase-1 domain in the interval 169–271; that stretch reads VLFFIHGVGG…HKVIMINGGG (103 aa). Catalysis depends on charge relay system residues serine 244, aspartate 362, and histidine 390. The segment at 415 to 439 is disordered; sequence EAEPKLEPKPKPQLLQPEPAPGEEK.

Belongs to the AB hydrolase superfamily. Interacts with NLRP3 (via NACHT and LLR domains); this interaction is enhanced in the presence of NLRP3 inflammasome inducers, such as ATP, nigericin, silica, or alum. Interacts with ZDHHC12.

The protein localises to the cytoplasm. Negatively regulates NLRP3-driven inflammation. Promotes NLRP3 degradation through the chaperone-mediated autophagy (CMA) pathway, hence attenuating inflammasome activation and IL1B secretion. Acts by recruiting palmitoyltransferase ZDHHC12 to NLRP3, facilitating NLRP3 palmitoylation and subsequent degradation. This chain is Protein ABHD8, found in Mus musculus (Mouse).